The chain runs to 962 residues: Protein kinase ORF73 (962 aa).

2 disordered regions span residues 1-28 and 62-152; these read MADRTPKRSADGLIHDAKPSKVTKNDRP and STPA…RATT. Positions 81–90 are enriched in acidic residues; the sequence is DSDDDDEEDN. Polar residues predominate over residues 143 to 152; sequence YDTTGRRATT. The Protein kinase domain occupies 301–595; the sequence is LRAAPVLGKG…ASDLLKSPRY (295 aa). Residues 307-315 and Lys-324 contribute to the ATP site; that span reads LGKGYFGTV. Residue Asp-434 is the Proton acceptor of the active site.

It belongs to the protein kinase superfamily. Ser/Thr protein kinase family.

It carries out the reaction L-seryl-[protein] + ATP = O-phospho-L-seryl-[protein] + ADP + H(+). The catalysed reaction is L-threonyl-[protein] + ATP = O-phospho-L-threonyl-[protein] + ADP + H(+). This Ictaluridae (bullhead catfishes) protein is Protein kinase ORF73 (ORF73).